Reading from the N-terminus, the 352-residue chain is Ion-translocating oxidoreductase complex subunit D (352 aa).

Helical transmembrane passes span 20–40, 42–62, 89–109, and 123–143; these read IMLLVLLAAVPGIAAQLWFFG, GTLVQILLASVSALLAEALVL, IPPLAPWWMVVLGTVFAAIIA, and PAMIGYVVLLISFPVQMTSWL. Residue Thr187 is modified to FMN phosphoryl threonine. The next 5 membrane-spanning stretches (helical) occupy residues 214 to 234, 242 to 262, 267 to 287, 301 to 321, and 322 to 342; these read ILAGAGWQWVNLAWLAGGLWL, WHIPLSFLVTLALCATLGWLF, LAAPQIHLLSGATMLGAFFIL, LIFGALAGLLVWLIRSFGGYP, and DGVAFAVLLANITVPLIDYYT.

This sequence belongs to the NqrB/RnfD family. In terms of assembly, the complex is composed of six subunits: RsxA, RsxB, RsxC, RsxD, RsxE and RsxG. It depends on FMN as a cofactor.

The protein resides in the cell inner membrane. In terms of biological role, part of a membrane-bound complex that couples electron transfer with translocation of ions across the membrane. Required to maintain the reduced state of SoxR. This is Ion-translocating oxidoreductase complex subunit D from Escherichia coli (strain ATCC 8739 / DSM 1576 / NBRC 3972 / NCIMB 8545 / WDCM 00012 / Crooks).